Here is a 258-residue protein sequence, read N- to C-terminus: uncharacterized protein (258 aa).

Transmembrane regions (helical) follow at residues 8 to 28, 38 to 58, 70 to 90, 121 to 141, 176 to 196, 204 to 224, and 231 to 251; these read VFLALSGAIAFLLPIGLIVWF, VFFIGALTFFVFAQLLEGGVH, EAMQHPLWYGIYGCLMAGIFE, LEAILITGLSSISLIVYAFAI, LGGIERISAIAVQIGLSLLVL, PLFLLYSILLHALFNVPAVLY, and HAAAVEIIVALIAALSVYWIV.

It localises to the cell membrane. This is an uncharacterized protein from Bacillus subtilis (strain 168).